The chain runs to 324 residues: Histidine N-acetyltransferase (324 aa).

Residues 15-151 (FEFVLAAEKE…GILLLSFNAP (137 aa)) form the N-acetyltransferase domain.

It carries out the reaction L-histidine + acetyl-CoA = N(alpha)-acetyl-L-histidine + CoA + H(+). Its function is as follows. Enzyme responsible for the N-acetyl-histidine (NAH) synthesis, which is a major constituent of brain and lens of ectothermic vertebrates. This chain is Histidine N-acetyltransferase (hisat), found in Xenopus tropicalis (Western clawed frog).